The sequence spans 206 residues: 3-isopropylmalate dehydratase small subunit (206 aa).

Belongs to the LeuD family. LeuD type 1 subfamily. As to quaternary structure, heterodimer of LeuC and LeuD.

It catalyses the reaction (2R,3S)-3-isopropylmalate = (2S)-2-isopropylmalate. It functions in the pathway amino-acid biosynthesis; L-leucine biosynthesis; L-leucine from 3-methyl-2-oxobutanoate: step 2/4. In terms of biological role, catalyzes the isomerization between 2-isopropylmalate and 3-isopropylmalate, via the formation of 2-isopropylmaleate. The protein is 3-isopropylmalate dehydratase small subunit of Leptospira interrogans serogroup Icterohaemorrhagiae serovar copenhageni (strain Fiocruz L1-130).